Here is a 461-residue protein sequence, read N- to C-terminus: GTPase Der (461 aa).

2 consecutive EngA-type G domains span residues 25 to 188 and 198 to 371; these read PVVA…PNVA and RRVA…ASWD. GTP contacts are provided by residues 31–38, 78–82, 140–143, 204–211, 251–255, and 316–319; these read GRPNVGKS, DTGGW, NKVD, GKPNVGKS, DTAGL, and NKWD. Positions 372–454 constitute a KH-like domain; the sequence is TRIATGPLNI…PIRINVRVRE (83 aa).

The protein belongs to the TRAFAC class TrmE-Era-EngA-EngB-Septin-like GTPase superfamily. EngA (Der) GTPase family. In terms of assembly, associates with the 50S ribosomal subunit.

Its function is as follows. GTPase that plays an essential role in the late steps of ribosome biogenesis. The protein is GTPase Der of Mycobacterium leprae (strain TN).